The sequence spans 435 residues: 5-methylthioadenosine/S-adenosylhomocysteine deaminase (435 aa).

2 residues coordinate Zn(2+): histidine 65 and histidine 67. Glutamate 94, arginine 150, and histidine 189 together coordinate substrate. A Zn(2+)-binding site is contributed by histidine 216. Substrate-binding residues include glutamate 219 and aspartate 304. Aspartate 304 is a binding site for Zn(2+).

Belongs to the metallo-dependent hydrolases superfamily. MTA/SAH deaminase family. Zn(2+) serves as cofactor.

The catalysed reaction is S-adenosyl-L-homocysteine + H2O + H(+) = S-inosyl-L-homocysteine + NH4(+). It carries out the reaction S-methyl-5'-thioadenosine + H2O + H(+) = S-methyl-5'-thioinosine + NH4(+). Catalyzes the deamination of 5-methylthioadenosine and S-adenosyl-L-homocysteine into 5-methylthioinosine and S-inosyl-L-homocysteine, respectively. Is also able to deaminate adenosine. The chain is 5-methylthioadenosine/S-adenosylhomocysteine deaminase from Bacillus cereus (strain ATCC 10987 / NRS 248).